The sequence spans 319 residues: Major intracellular serine protease (319 aa).

Residues 1-17 (MNGEIRLIPYVTNEQIM) constitute a propeptide that is removed on maturation. Residues 23–307 (PEGIKVIKAP…FLYLTAPDEL (285 aa)) enclose the Peptidase S8 domain. Residues aspartate 50, histidine 87, and serine 246 each act as charge relay system in the active site.

Belongs to the peptidase S8 family. Homodimer.

Its subcellular location is the cytoplasm. Its function is as follows. Major intracellular protease produced by Bacillus subtilis. The sequence is that of Major intracellular serine protease (isp) from Bacillus subtilis (strain 168).